Here is a 181-residue protein sequence, read N- to C-terminus: MGNMFANLFKGLFGKKEMRILMVGLDAAGKTTILYKLKLGEIVTTIPTIGFNVETVEYKNISFTVWDVGGQDKIRPLWRHYFQNTQGLIFVVDSNDRERVNEAREELMRMLAEDELRDAVLLVFANKQDLPNAMNAAEITDKLGLHSLRHRNWYIQATCATSGDGLYEGLDWLSNQLRNQK.

The N-myristoyl glycine moiety is linked to residue Gly-2. Positions 3–16 (NMFANLFKGLFGKK) are important for the stable binding to the membranes. Residues 24 to 32 (GLDAAGKTT), 126 to 129 (NKQD), and Ala-160 contribute to the GTP site.

Belongs to the small GTPase superfamily. Arf family.

Its subcellular location is the golgi apparatus membrane. It carries out the reaction GTP + H2O = GDP + phosphate + H(+). Its activity is regulated as follows. Alternates between an inactive GDP-bound form and an active GTP-bound form. Activated by a guanine nucleotide-exchange factor (GEF) and inactivated by GTPase-activating protein (GAP). Functionally, small GTPase involved in protein trafficking between different compartments. Modulates vesicle budding and uncoating within the Golgi complex. In its GTP-bound form, triggers the recruitment of coatomer proteins to the Golgi membrane. The hydrolysis of ARF1-bound GTP, which is mediated by ARFGAPs proteins, is required for dissociation of coat proteins from Golgi membranes and vesicles. The protein is ADP-ribosylation factor 1 (arf1) of Xenopus laevis (African clawed frog).